Consider the following 355-residue polypeptide: Anthocyanin synthase (355 aa).

Substrate is bound by residues Y145 and K216. One can recognise a Fe2OG dioxygenase domain in the interval 211–310 (LLLQMKINYY…RISWAVFCEP (100 aa)). 218–220 (NYY) lines the 2-oxoglutarate pocket. H235 contributes to the Fe cation binding site. T236 provides a ligand contact to substrate. Positions 237 and 291 each coordinate Fe cation. Residues R301 and 301–303 (RIS) contribute to the 2-oxoglutarate site. 2 residues coordinate substrate: E309 and K344.

Belongs to the iron/ascorbate-dependent oxidoreductase family. L-ascorbate serves as cofactor. Fe(2+) is required as a cofactor. As to expression, expressed in stems and leaves. Expressed at low levels in ovaries.

The enzyme catalyses a (2R,3S,4S)-leucoanthocyanidin + 2-oxoglutarate + O2 = a 4-H-anthocyanidin with a 3-hydroxy group + succinate + CO2 + 2 H2O. It functions in the pathway pigment biosynthesis; anthocyanin biosynthesis. Functionally, involved in anthocyanin biosynthesis by catalyzing the oxidation of leucoanthocyanidins into anthocyanidins. Required for the accumulation of anthocyanin in red-fleshed kiwifruit varieties. The sequence is that of Anthocyanin synthase from Actinidia chinensis var. chinensis (Chinese soft-hair kiwi).